The chain runs to 169 residues: Translationally-controlled tumor protein homolog (169 aa).

One can recognise a TCTP domain in the interval 1-169 (MIIYKDIVSG…FKDGLEEEKF (169 aa)).

This sequence belongs to the TCTP family.

The protein localises to the cytoplasm. Involved in calcium binding and microtubule stabilization. This chain is Translationally-controlled tumor protein homolog, found in Branchiostoma belcheri (Amphioxus).